A 460-amino-acid chain; its full sequence is Argininosuccinate lyase (460 aa).

This sequence belongs to the lyase 1 family. Argininosuccinate lyase subfamily.

It localises to the cytoplasm. The catalysed reaction is 2-(N(omega)-L-arginino)succinate = fumarate + L-arginine. It functions in the pathway amino-acid biosynthesis; L-arginine biosynthesis; L-arginine from L-ornithine and carbamoyl phosphate: step 3/3. The chain is Argininosuccinate lyase from Campylobacter jejuni (strain RM1221).